The sequence spans 383 residues: NADH-quinone oxidoreductase subunit D 1 (383 aa).

The protein belongs to the complex I 49 kDa subunit family. NDH-1 is composed of 14 different subunits. Subunits NuoB, C, D, E, F, and G constitute the peripheral sector of the complex.

The protein resides in the cell membrane. The catalysed reaction is a quinone + NADH + 5 H(+)(in) = a quinol + NAD(+) + 4 H(+)(out). In terms of biological role, NDH-1 shuttles electrons from NADH, via FMN and iron-sulfur (Fe-S) centers, to quinones in the respiratory chain. The immediate electron acceptor for the enzyme in this species is believed to be a menaquinone. Couples the redox reaction to proton translocation (for every two electrons transferred, four hydrogen ions are translocated across the cytoplasmic membrane), and thus conserves the redox energy in a proton gradient. The chain is NADH-quinone oxidoreductase subunit D 1 from Streptomyces coelicolor (strain ATCC BAA-471 / A3(2) / M145).